A 233-amino-acid chain; its full sequence is 5'-methylthioadenosine/S-adenosylhomocysteine nucleosidase (233 aa).

The active-site Proton acceptor is the glutamate 12. Residues glycine 78, isoleucine 153, and 174–175 contribute to the substrate site; that span reads ME. Aspartate 198 functions as the Proton donor in the catalytic mechanism.

The protein belongs to the PNP/UDP phosphorylase family. MtnN subfamily.

The catalysed reaction is S-adenosyl-L-homocysteine + H2O = S-(5-deoxy-D-ribos-5-yl)-L-homocysteine + adenine. The enzyme catalyses S-methyl-5'-thioadenosine + H2O = 5-(methylsulfanyl)-D-ribose + adenine. It catalyses the reaction 5'-deoxyadenosine + H2O = 5-deoxy-D-ribose + adenine. It participates in amino-acid biosynthesis; L-methionine biosynthesis via salvage pathway; S-methyl-5-thio-alpha-D-ribose 1-phosphate from S-methyl-5'-thioadenosine (hydrolase route): step 1/2. Functionally, catalyzes the irreversible cleavage of the glycosidic bond in both 5'-methylthioadenosine (MTA) and S-adenosylhomocysteine (SAH/AdoHcy) to adenine and the corresponding thioribose, 5'-methylthioribose and S-ribosylhomocysteine, respectively. Also cleaves 5'-deoxyadenosine, a toxic by-product of radical S-adenosylmethionine (SAM) enzymes, into 5-deoxyribose and adenine. In Exiguobacterium sp. (strain ATCC BAA-1283 / AT1b), this protein is 5'-methylthioadenosine/S-adenosylhomocysteine nucleosidase.